The following is a 507-amino-acid chain: Secreted lipase ARB_01498 (507 aa).

A signal peptide spans 1–21 (MFVQLLTYGLVAASTLQGVFA). Ser-196 functions as the Acyl-ester intermediate in the catalytic mechanism. N-linked (GlcNAc...) asparagine glycans are attached at residues Asn-262, Asn-321, Asn-358, and Asn-416.

Belongs to the type-B carboxylesterase/lipase family.

Its subcellular location is the secreted. The catalysed reaction is a triacylglycerol + H2O = a diacylglycerol + a fatty acid + H(+). The protein is Secreted lipase ARB_01498 of Arthroderma benhamiae (strain ATCC MYA-4681 / CBS 112371) (Trichophyton mentagrophytes).